The chain runs to 255 residues: Hydroxyacylglutathione hydrolase (255 aa).

The Zn(2+) site is built by histidine 56, histidine 58, aspartate 60, histidine 61, histidine 114, aspartate 133, and histidine 171.

This sequence belongs to the metallo-beta-lactamase superfamily. Glyoxalase II family. As to quaternary structure, monomer. Requires Zn(2+) as cofactor.

It catalyses the reaction an S-(2-hydroxyacyl)glutathione + H2O = a 2-hydroxy carboxylate + glutathione + H(+). It functions in the pathway secondary metabolite metabolism; methylglyoxal degradation; (R)-lactate from methylglyoxal: step 2/2. Its function is as follows. Thiolesterase that catalyzes the hydrolysis of S-D-lactoyl-glutathione to form glutathione and D-lactic acid. The polypeptide is Hydroxyacylglutathione hydrolase (Cereibacter sphaeroides (strain ATCC 17023 / DSM 158 / JCM 6121 / CCUG 31486 / LMG 2827 / NBRC 12203 / NCIMB 8253 / ATH 2.4.1.) (Rhodobacter sphaeroides)).